The chain runs to 245 residues: Carbohydrate deacetylase (245 aa).

Histidine 59 and histidine 121 together coordinate Mg(2+).

The protein belongs to the YdjC deacetylase family. As to quaternary structure, homodimer. The cofactor is Mg(2+).

In terms of biological role, probably catalyzes the deacetylation of acetylated carbohydrates an important step in the degradation of oligosaccharides. This Clostridium beijerinckii (strain ATCC 51743 / NCIMB 8052) (Clostridium acetobutylicum) protein is Carbohydrate deacetylase.